The primary structure comprises 84 residues: Dolichol phosphate-mannose biosynthesis regulatory protein (84 aa).

The next 2 helical transmembrane spans lie at 11-31 and 49-69; these read LGLVAVSLIIFTYYTAWVILL and YAVAIPLAAGLLLLLFVGLFI.

This sequence belongs to the DPM2 family. Component of the dolichol-phosphate mannose (DPM) synthase complex composed of DPM1, DPM2 and DPM3; in the complex interacts directly with DPM3. Component of the glycosylphosphatidylinositol-N-acetylglucosaminyltransferase (GPI-GnT) complex composed at least by PIGA, PIGC, PIGH, PIGP, PIGQ, PIGY and DPM2. Interacts with PIGA, PIGC and PIGQ.

The protein localises to the endoplasmic reticulum membrane. It participates in protein modification; protein glycosylation. In terms of biological role, regulates the biosynthesis of dolichol phosphate-mannose. Regulatory subunit of the dolichol-phosphate mannose (DPM) synthase complex; essential for the ER localization and stable expression of DPM1. Part of the glycosylphosphatidylinositol-N-acetylglucosaminyltransferase (GPI-GnT) complex that catalyzes the transfer of N-acetylglucosamine from UDP-N-acetylglucosamine to phosphatidylinositol and participates in the first step of GPI biosynthesis. May act by regulating the GPI-GNT complex. The protein is Dolichol phosphate-mannose biosynthesis regulatory protein of Homo sapiens (Human).